A 714-amino-acid chain; its full sequence is ATP-dependent zinc metalloprotease FtsH (714 aa).

Residues M1–Q75 are Cytoplasmic-facing. Residues F76–V96 form a helical membrane-spanning segment. The Periplasmic portion of the chain corresponds to S97–L188. Residues S189 to I209 traverse the membrane as a helical segment. Topologically, residues K210–T714 are cytoplasmic. G280–T287 contributes to the ATP binding site. Residue H502 participates in Zn(2+) binding. E503 is an active-site residue. Zn(2+)-binding residues include H506 and D579. The segment at P688 to T714 is disordered. Residues E699–T714 show a composition bias toward polar residues.

In the central section; belongs to the AAA ATPase family. The protein in the C-terminal section; belongs to the peptidase M41 family. Homohexamer. The cofactor is Zn(2+).

The protein localises to the cell inner membrane. Acts as a processive, ATP-dependent zinc metallopeptidase for both cytoplasmic and membrane proteins. Plays a role in the quality control of integral membrane proteins. This chain is ATP-dependent zinc metalloprotease FtsH, found in Ralstonia pickettii (strain 12J).